The following is a 334-amino-acid chain: Aspartate carbamoyltransferase catalytic subunit (334 aa).

The carbamoyl phosphate site is built by Arg70 and Thr71. L-aspartate is bound at residue Lys98. Residues Arg120, His150, and Gln153 each contribute to the carbamoyl phosphate site. L-aspartate is bound by residues Arg183 and Arg239. Residues Gly280 and Pro281 each coordinate carbamoyl phosphate.

Belongs to the aspartate/ornithine carbamoyltransferase superfamily. ATCase family. As to quaternary structure, heterododecamer (2C3:3R2) of six catalytic PyrB chains organized as two trimers (C3), and six regulatory PyrI chains organized as three dimers (R2).

The enzyme catalyses carbamoyl phosphate + L-aspartate = N-carbamoyl-L-aspartate + phosphate + H(+). Its pathway is pyrimidine metabolism; UMP biosynthesis via de novo pathway; (S)-dihydroorotate from bicarbonate: step 2/3. Catalyzes the condensation of carbamoyl phosphate and aspartate to form carbamoyl aspartate and inorganic phosphate, the committed step in the de novo pyrimidine nucleotide biosynthesis pathway. The protein is Aspartate carbamoyltransferase catalytic subunit of Pseudomonas aeruginosa (strain LESB58).